A 92-amino-acid chain; its full sequence is Small ribosomal subunit protein uS19c (92 aa).

This sequence belongs to the universal ribosomal protein uS19 family.

The protein resides in the plastid. Its subcellular location is the chloroplast. Functionally, protein S19 forms a complex with S13 that binds strongly to the 16S ribosomal RNA. The protein is Small ribosomal subunit protein uS19c of Ceratophyllum demersum (Rigid hornwort).